An 87-amino-acid chain; its full sequence is Prolactin-releasing peptide (87 aa).

Positions Met-1–Ala-22 are cleaved as a signal peptide. Phe-53 carries the post-translational modification Phenylalanine amide. Positions Ala-58 to Gly-87 are excised as a propeptide.

Medulla oblongata and hypothalamus.

Its subcellular location is the secreted. In terms of biological role, stimulates prolactin (PRL) release and regulates the expression of prolactin through its receptor GPR10. May stimulate lactotrophs directly to secrete PRL. The sequence is that of Prolactin-releasing peptide (PRLH) from Homo sapiens (Human).